The primary structure comprises 248 residues: 3-deoxy-manno-octulosonate cytidylyltransferase (248 aa).

Belongs to the KdsB family.

Its subcellular location is the cytoplasm. The enzyme catalyses 3-deoxy-alpha-D-manno-oct-2-ulosonate + CTP = CMP-3-deoxy-beta-D-manno-octulosonate + diphosphate. It participates in nucleotide-sugar biosynthesis; CMP-3-deoxy-D-manno-octulosonate biosynthesis; CMP-3-deoxy-D-manno-octulosonate from 3-deoxy-D-manno-octulosonate and CTP: step 1/1. The protein operates within bacterial outer membrane biogenesis; lipopolysaccharide biosynthesis. Functionally, activates KDO (a required 8-carbon sugar) for incorporation into bacterial lipopolysaccharide in Gram-negative bacteria. The polypeptide is 3-deoxy-manno-octulosonate cytidylyltransferase (Salmonella arizonae (strain ATCC BAA-731 / CDC346-86 / RSK2980)).